Reading from the N-terminus, the 558-residue chain is Urocanate hydratase (558 aa).

Residues glycine 54–glycine 55, glutamine 132, glycine 178–glycine 180, glutamate 198, asparagine 244–alanine 245, glutamine 265–histidine 269, tyrosine 275–leucine 276, and tyrosine 324 contribute to the NAD(+) site. The active site involves cysteine 412. Glycine 494 is an NAD(+) binding site.

Belongs to the urocanase family. NAD(+) serves as cofactor.

It is found in the cytoplasm. It catalyses the reaction 4-imidazolone-5-propanoate = trans-urocanate + H2O. Its pathway is amino-acid degradation; L-histidine degradation into L-glutamate; N-formimidoyl-L-glutamate from L-histidine: step 2/3. Functionally, catalyzes the conversion of urocanate to 4-imidazolone-5-propionate. The sequence is that of Urocanate hydratase from Acinetobacter baumannii (strain AB307-0294).